The primary structure comprises 667 residues: Acyl-coenzyme A oxidase acox-3 (667 aa).

FAD is bound by residues 138–141 (FCLT), 146–147 (GS), G178, R313, 334–337 (QQYR), and G410. E433 functions as the Proton acceptor in the catalytic mechanism. E435 contributes to the FAD binding site. Positions 665 to 667 (SKL) match the Microbody targeting signal motif.

Belongs to the acyl-CoA oxidase family. Homodimer. FAD is required as a cofactor. As to expression, expressed in intestine.

The protein resides in the peroxisome. It catalyses the reaction IC-asc-C7-CoA + O2 = IC-asc-DeltaC7-CoA + H2O2. It carries out the reaction IC-asc-C9-CoA + O2 = IC-asc-DeltaC9-CoA + H2O2. The catalysed reaction is asc-C13-CoA + O2 = asc-DeltaC13-CoA + H2O2. The protein operates within lipid metabolism; peroxisomal fatty acid beta-oxidation. In contrast to other acyl-coenzyme A oxidases which bind to and are activated by ATP, does not bind ATP. Its function is as follows. Involved in the first step of peroxisomal beta-oxidation by catalyzing the desaturation of fatty acid-derived side chains of ascaroside pheromones, which regulates development and behavior. Specifically, shortens indol-3-carbonyl(IC)-ascarosides with 7-carbon (IC-asc-C7) or 9-carbon (IC-asc-C9) side chains and contributes to the shortening of ascarosides with 13-carbon (asc-C13) and 15-carbon (asc-C15) side chains. The chain is Acyl-coenzyme A oxidase acox-3 from Caenorhabditis elegans.